Reading from the N-terminus, the 624-residue chain is (-)-beta-phellandrene synthase 2, chloroplastic (624 aa).

A chloroplast-targeting transit peptide spans 1-48 (MAIVSSVPLASKSCLHKSLISSIHKLKPFCRTIPTLGMSRPGKYVMPS). Mg(2+) contacts are provided by Asp-375, Asp-379, and Asp-527. Positions 375–379 (DDMYD) match the DDXXD motif motif.

The protein belongs to the terpene synthase family. Tpsd subfamily. It depends on Mg(2+) as a cofactor. Requires Mn(2+) as cofactor.

The protein resides in the plastid. It localises to the chloroplast. The enzyme catalyses (2E)-geranyl diphosphate = (-)-beta-phellandrene + diphosphate. The protein operates within terpene metabolism; oleoresin biosynthesis. In terms of biological role, terpene synthase (TPS) involved in the biosynthesis of monoterpene natural products included in conifer oleoresin secretions and volatile emissions; these compounds contribute to biotic and abiotic stress defense against herbivores and pathogens. Catalyzes the conversion of (2E)-geranyl diphosphate (GPP) to (-)-beta-phellandrene. The chain is (-)-beta-phellandrene synthase 2, chloroplastic from Picea sitchensis (Sitka spruce).